Here is a 679-residue protein sequence, read N- to C-terminus: Glycine--tRNA ligase beta subunit (679 aa).

Belongs to the class-II aminoacyl-tRNA synthetase family. In terms of assembly, tetramer of two alpha and two beta subunits.

It localises to the cytoplasm. It carries out the reaction tRNA(Gly) + glycine + ATP = glycyl-tRNA(Gly) + AMP + diphosphate. The chain is Glycine--tRNA ligase beta subunit from Streptococcus pyogenes serotype M49 (strain NZ131).